Here is a 394-residue protein sequence, read N- to C-terminus: GTPase Obg (394 aa).

Residues 5-163 form the Obg domain; that stretch reads SNFVDYVKIY…RMVIMQLKML (159 aa). Positions 26 to 45 are disordered; that stretch reads HFRREKYIPKGGPDGGDGGR. The region spanning 164-330 is the OBG-type G domain; the sequence is ADVGLVGFPN…LKDTLWKELS (167 aa). GTP is bound by residues 170-177, 195-199, 217-220, 284-287, and 311-313; these read GFPNAGKS, FTTLE, DIPG, TKCD, and SAV. Mg(2+)-binding residues include Ser-177 and Thr-197.

Belongs to the TRAFAC class OBG-HflX-like GTPase superfamily. OBG GTPase family. As to quaternary structure, monomer. Mg(2+) is required as a cofactor.

The protein localises to the cytoplasm. In terms of biological role, an essential GTPase which binds GTP, GDP and possibly (p)ppGpp with moderate affinity, with high nucleotide exchange rates and a fairly low GTP hydrolysis rate. Plays a role in control of the cell cycle, stress response, ribosome biogenesis and in those bacteria that undergo differentiation, in morphogenesis control. This Porphyromonas gingivalis (strain ATCC 33277 / DSM 20709 / CIP 103683 / JCM 12257 / NCTC 11834 / 2561) protein is GTPase Obg.